Consider the following 132-residue polypeptide: Small ribosomal subunit protein uS8 (132 aa).

This sequence belongs to the universal ribosomal protein uS8 family. As to quaternary structure, part of the 30S ribosomal subunit. Contacts proteins S5 and S12.

One of the primary rRNA binding proteins, it binds directly to 16S rRNA central domain where it helps coordinate assembly of the platform of the 30S subunit. The protein is Small ribosomal subunit protein uS8 of Desulforamulus reducens (strain ATCC BAA-1160 / DSM 100696 / MI-1) (Desulfotomaculum reducens).